We begin with the raw amino-acid sequence, 287 residues long: MGKIKLKNRKALVVYDNKDDFEKNQTFALSLIKELQKKKLNAEVLLLENKDINFEAKINEAELILNRSRKVDFLKTNNQINTFLVNPFNVVFIANDKYETYKWLKQNRFLTVNSSLLSKETIKSFPVIVKKRNSHGGKDVHLVNSADEIKHLNIENATEWIVQPFLSIGTVEYRAYILFGKIIKVIKKISNANQFKANFSQGAEVSLFKLKWFTKRKIKKIAKRLREGYYAIDFFLNRYNRVIVNEIEDAAGARALVQLCPDLNITKIIIRTIISKFKKFLKKKLIS.

The 173-residue stretch at 115 to 287 (SLLSKETIKS…KKFLKKKLIS (173 aa)) folds into the ATP-grasp domain.

This is an uncharacterized protein from Mycoplasma genitalium (strain ATCC 33530 / DSM 19775 / NCTC 10195 / G37) (Mycoplasmoides genitalium).